Consider the following 182-residue polypeptide: MKGKETMSKQNEKLVVGKLGSSYGIRGWLKVFSYTDNPESIFDYSPWYIDQKGEWVEYKVEGWKRHNKGWVVKLQGLDVREDAHLLTNFEIAIDPASLPELSEDEFYWRELFGMQVVTTNGYDLGVVTDMMETGSNDVLVVKANLKDAFGQKERLIPFLEEQVIKVVDRQAQRIEVDWDPAF.

The PRC barrel domain maps to 103–182; sequence EDEFYWRELF…RIEVDWDPAF (80 aa).

It belongs to the RimM family. Binds ribosomal protein uS19.

Its subcellular location is the cytoplasm. In terms of biological role, an accessory protein needed during the final step in the assembly of 30S ribosomal subunit, possibly for assembly of the head region. Essential for efficient processing of 16S rRNA. May be needed both before and after RbfA during the maturation of 16S rRNA. It has affinity for free ribosomal 30S subunits but not for 70S ribosomes. In Vibrio cholerae serotype O1 (strain ATCC 39315 / El Tor Inaba N16961), this protein is Ribosome maturation factor RimM.